Consider the following 315-residue polypeptide: Cell division protein FtsZ (315 aa).

GTP contacts are provided by residues G55–G57, E98, R102, and D146.

This sequence belongs to the FtsZ family. In terms of assembly, homodimer. Polymerizes to form a dynamic ring structure in a strictly GTP-dependent manner. Interacts directly with several other division proteins.

It is found in the cytoplasm. Functionally, essential cell division protein that forms a contractile ring structure (Z ring) at the future cell division site. The regulation of the ring assembly controls the timing and the location of cell division. One of the functions of the FtsZ ring is to recruit other cell division proteins to the septum to produce a new cell wall between the dividing cells. Binds GTP and shows GTPase activity. The protein is Cell division protein FtsZ of Wolbachia pipientis.